Consider the following 1250-residue polypeptide: DNA topoisomerase 3-alpha (1250 aa).

The Toprim domain occupies 27–171 (KYLNVAEKND…NISVYRATFS (145 aa)). A Topo IA-type catalytic domain is found at 189–610 (DKRQSDAVDV…EQIAKYKQAY (422 aa)). Y356 serves as the catalytic O-(5'-phospho-DNA)-tyrosine intermediate. Positions 769-835 (RGGGGGPGPG…GTGGGGLGGG (67 aa)) are enriched in gly residues. 2 disordered regions span residues 769-899 (RGGG…GLDE) and 953-1035 (NGGT…TVLC). The segment covering 840-865 (PGGESKKSATKKPPNEPKPKKTKEPK) has biased composition (basic and acidic residues). Residues 866–886 (AAPNKKTSSKSSGSIRSFFTS) show a composition bias toward low complexity. Over residues 956–965 (TMPTESNGDQ) the composition is skewed to polar residues. Composition is skewed to basic and acidic residues over residues 966–994 (QLDK…RERA) and 1012–1021 (PRWDSVERDS). Positions 1022-1033 (TPPSSVPESETV) are enriched in low complexity. Zn(2+) contacts are provided by C1035, C1038, C1061, and C1067. The GRF-type 1 zinc finger occupies 1035 to 1076 (CTGCQQPARQNTVRKNGPNLGRLYYKCPKPDECNFFQWADEP). The disordered stretch occupies residues 1069-1150 (FFQWADEPPS…TATPGDGEEV (82 aa)). Polar residues predominate over residues 1079–1101 (SAKSKNSTGSAPQSTTSWGSNRV). Low complexity predominate over residues 1106-1134 (SIQQSNSQRGQSSMRSNSSSTVTITQTKT). Zn(2+)-binding residues include C1152, C1154, C1177, and C1184. The GRF-type 2 zinc-finger motif lies at 1152 to 1193 (CNCGQLASQLTVRKDGPNQGRPFYACPTREKSCGFFKWGDED). The disordered stretch occupies residues 1188-1231 (KWGDEDQNQGASSTSWGSANRNPPGRSQPTAITSDGPKTRRCGL). The segment covering 1195–1220 (NQGASSTSWGSANRNPPGRSQPTAIT) has biased composition (polar residues).

Belongs to the type IA topoisomerase family.

It catalyses the reaction ATP-independent breakage of single-stranded DNA, followed by passage and rejoining.. In terms of biological role, releases the supercoiling and torsional tension of DNA introduced during the DNA replication and transcription by transiently cleaving and rejoining one strand of the DNA duplex. Introduces a single-strand break via transesterification at a target site in duplex DNA. The scissile phosphodiester is attacked by the catalytic tyrosine of the enzyme, resulting in the formation of a DNA-(5'-phosphotyrosyl)-enzyme intermediate and the expulsion of a 3'-OH DNA strand. The free DNA strand than undergoes passage around the unbroken strand thus removing DNA supercoils. Finally, in the religation step, the DNA 3'-OH attacks the covalent intermediate to expel the active-site tyrosine and restore the DNA phosphodiester backbone. Weakly relaxes negative supercoils and displays a distinct preference for binding single-stranded DNA. In Drosophila melanogaster (Fruit fly), this protein is DNA topoisomerase 3-alpha (Top3alpha).